Here is a 768-residue protein sequence, read N- to C-terminus: Dual specificity calcium/calmodulin-dependent 3',5'-cyclic nucleotide phosphodiesterase 1C (768 aa).

Residue Met1 is modified to N-acetylmethionine. Residues Glu183–Arg206 are calmodulin-binding. In terms of domain architecture, PDEase spans Val211–Glu588. His288 functions as the Proton donor in the catalytic mechanism. 4 residues coordinate Zn(2+): His292, His328, Asp329, and Asp436. Asp329 lines the Mg(2+) pocket. Disordered regions lie at residues Leu513 to Ser557 and Lys584 to Arg719. Composition is skewed to polar residues over residues Glu516 to Ser536 and Val543 to Ser557. The segment covering Lys584 to Ser614 has biased composition (basic and acidic residues). A compositionally biased stretch (polar residues) spans Glu631–Thr641. 2 stretches are compositionally biased toward basic and acidic residues: residues Ser642–Glu659 and Asp665–Lys692. Positions Ser698–Pro712 are enriched in low complexity.

It belongs to the cyclic nucleotide phosphodiesterase family. PDE1 subfamily. Homodimer. Zn(2+) is required as a cofactor. It depends on Mg(2+) as a cofactor. As to expression, highly expressed in olfactory epithelium and at moderate levels, in cerebellum, as well as weakly in forebrain, testis, heart and lung. In the olfactory epithelium, expressed by sensory neurons, but not epithelial cells.

Its subcellular location is the lysosome. The catalysed reaction is a nucleoside 3',5'-cyclic phosphate + H2O = a nucleoside 5'-phosphate + H(+). It catalyses the reaction 3',5'-cyclic GMP + H2O = GMP + H(+). It carries out the reaction 3',5'-cyclic AMP + H2O = AMP + H(+). Type I PDE are activated by the binding of calmodulin in the presence of Ca(2+). Calmodulin-dependent cyclic nucleotide phosphodiesterase with a dual specificity for the second messengers cAMP and cGMP, which are key regulators of many important physiological processes. Has a high affinity for both cAMP and cGMP. Modulates the amplitude and duration of the cAMP signal in sensory cilia in response to odorant stimulation, hence contributing to the generation of action potentials. Regulates smooth muscle cell proliferation. Regulates the stability of growth factor receptors, including PDGFRB. The polypeptide is Dual specificity calcium/calmodulin-dependent 3',5'-cyclic nucleotide phosphodiesterase 1C (Rattus norvegicus (Rat)).